Here is a 269-residue protein sequence, read N- to C-terminus: Trans-aconitate 2-methyltransferase (269 aa).

It belongs to the methyltransferase superfamily. Tam family.

It is found in the cytoplasm. It catalyses the reaction trans-aconitate + S-adenosyl-L-methionine = (E)-3-(methoxycarbonyl)pent-2-enedioate + S-adenosyl-L-homocysteine. Functionally, catalyzes the S-adenosylmethionine monomethyl esterification of trans-aconitate. This is Trans-aconitate 2-methyltransferase from Streptomyces avermitilis (strain ATCC 31267 / DSM 46492 / JCM 5070 / NBRC 14893 / NCIMB 12804 / NRRL 8165 / MA-4680).